Here is a 71-residue protein sequence, read N- to C-terminus: Large ribosomal subunit protein bL31 (71 aa).

The Zn(2+) site is built by Cys-16, Cys-18, Cys-38, and Cys-41.

Belongs to the bacterial ribosomal protein bL31 family. Type A subfamily. Part of the 50S ribosomal subunit. It depends on Zn(2+) as a cofactor.

Its function is as follows. Binds the 23S rRNA. The polypeptide is Large ribosomal subunit protein bL31 (Laribacter hongkongensis (strain HLHK9)).